Consider the following 248-residue polypeptide: Small ribosomal subunit protein uS3 (248 aa).

Residues 39–107 form the KH type-2 domain; that stretch reads IRQMLLKQLK…EVFINIVEIR (69 aa). The disordered stretch occupies residues 214-248; the sequence is AVDKRMTAESEGPSSGRPPRRDRDRDRDRDRDSAA. Positions 232–248 are enriched in basic and acidic residues; it reads PRRDRDRDRDRDRDSAA.

This sequence belongs to the universal ribosomal protein uS3 family. Part of the 30S ribosomal subunit. Forms a tight complex with proteins S10 and S14.

Functionally, binds the lower part of the 30S subunit head. Binds mRNA in the 70S ribosome, positioning it for translation. The chain is Small ribosomal subunit protein uS3 from Azorhizobium caulinodans (strain ATCC 43989 / DSM 5975 / JCM 20966 / LMG 6465 / NBRC 14845 / NCIMB 13405 / ORS 571).